The chain runs to 380 residues: XK-related protein 9 (380 aa).

Helical transmembrane passes span 10-30 (LLSA…AALV), 39-59 (VVCA…TQVF), 81-101 (LPVV…GIFI), 167-187 (CSLV…WALV), 228-248 (ALLL…WLLG), 264-284 (SLEF…FFNV), 294-314 (ITYY…LFVL), and 329-349 (TLMA…YLLL).

Belongs to the XK family.

It localises to the cell membrane. It carries out the reaction a 1,2-diacyl-sn-glycero-3-phospho-L-serine(in) = a 1,2-diacyl-sn-glycero-3-phospho-L-serine(out). Functionally, phospholipid scramblase that promotes phosphatidylserine exposure on apoptotic cell surface. Phosphatidylserine is a specific marker only present at the surface of apoptotic cells and acts as a specific signal for engulfment. The polypeptide is XK-related protein 9 (Tetraodon nigroviridis (Spotted green pufferfish)).